A 305-amino-acid polypeptide reads, in one-letter code: Acetylglutamate kinase (305 aa).

Residues 67–68 (GG), Arg-89, and Asn-190 contribute to the substrate site.

The protein belongs to the acetylglutamate kinase family. ArgB subfamily.

It localises to the cytoplasm. The enzyme catalyses N-acetyl-L-glutamate + ATP = N-acetyl-L-glutamyl 5-phosphate + ADP. Its pathway is amino-acid biosynthesis; L-arginine biosynthesis; N(2)-acetyl-L-ornithine from L-glutamate: step 2/4. Functionally, catalyzes the ATP-dependent phosphorylation of N-acetyl-L-glutamate. In Bifidobacterium longum subsp. infantis (strain ATCC 15697 / DSM 20088 / JCM 1222 / NCTC 11817 / S12), this protein is Acetylglutamate kinase.